The following is a 202-amino-acid chain: LexA repressor 1 (202 aa).

A DNA-binding region (H-T-H motif) is located at residues 28 to 48 (RAEIAQELGFKSPNAAEEHLK). Active-site for autocatalytic cleavage activity residues include Ser-123 and Lys-160.

The protein belongs to the peptidase S24 family. As to quaternary structure, homodimer.

The catalysed reaction is Hydrolysis of Ala-|-Gly bond in repressor LexA.. Represses a number of genes involved in the response to DNA damage (SOS response), including recA and lexA. In the presence of single-stranded DNA, RecA interacts with LexA causing an autocatalytic cleavage which disrupts the DNA-binding part of LexA, leading to derepression of the SOS regulon and eventually DNA repair. This is LexA repressor 1 from Pseudomonas syringae pv. tomato (strain ATCC BAA-871 / DC3000).